A 333-amino-acid chain; its full sequence is Ketol-acid reductoisomerase (NADP(+)) (333 aa).

The KARI N-terminal Rossmann domain maps to 2-182; it reads AELFYDADAD…GGTRAGVIKT (181 aa). NADP(+)-binding positions include 25-28, serine 51, serine 53, and 83-86; these read YGSQ and DPIQ. Residue histidine 108 is part of the active site. An NADP(+)-binding site is contributed by glycine 134. Residues 183–328 form the KARI C-terminal knotted domain; that stretch reads TFTEETETDL…KELRKLMSWV (146 aa). Positions 191, 195, 227, and 231 each coordinate Mg(2+). Serine 252 lines the substrate pocket.

The protein belongs to the ketol-acid reductoisomerase family. It depends on Mg(2+) as a cofactor.

It carries out the reaction (2R)-2,3-dihydroxy-3-methylbutanoate + NADP(+) = (2S)-2-acetolactate + NADPH + H(+). The enzyme catalyses (2R,3R)-2,3-dihydroxy-3-methylpentanoate + NADP(+) = (S)-2-ethyl-2-hydroxy-3-oxobutanoate + NADPH + H(+). The protein operates within amino-acid biosynthesis; L-isoleucine biosynthesis; L-isoleucine from 2-oxobutanoate: step 2/4. It participates in amino-acid biosynthesis; L-valine biosynthesis; L-valine from pyruvate: step 2/4. Functionally, involved in the biosynthesis of branched-chain amino acids (BCAA). Catalyzes an alkyl-migration followed by a ketol-acid reduction of (S)-2-acetolactate (S2AL) to yield (R)-2,3-dihydroxy-isovalerate. In the isomerase reaction, S2AL is rearranged via a Mg-dependent methyl migration to produce 3-hydroxy-3-methyl-2-ketobutyrate (HMKB). In the reductase reaction, this 2-ketoacid undergoes a metal-dependent reduction by NADPH to yield (R)-2,3-dihydroxy-isovalerate. The chain is Ketol-acid reductoisomerase (NADP(+)) from Streptomyces avermitilis (strain ATCC 31267 / DSM 46492 / JCM 5070 / NBRC 14893 / NCIMB 12804 / NRRL 8165 / MA-4680).